Consider the following 89-residue polypeptide: Large ribosomal subunit protein bL31B (89 aa).

Belongs to the bacterial ribosomal protein bL31 family. Type B subfamily. Part of the 50S ribosomal subunit.

The sequence is that of Large ribosomal subunit protein bL31B from Aeromonas salmonicida (strain A449).